The sequence spans 804 residues: Serine/threonine-protein kinase ATG1 (804 aa).

One can recognise a Protein kinase domain in the interval 12 to 308; the sequence is FTIGPEIGRG…FQEFFNDPLI (297 aa). Residues 18-26 and lysine 41 contribute to the ATP site; that span reads IGRGSFANV. Residue aspartate 158 is the Proton acceptor of the active site. Disordered regions lie at residues 339-364, 395-415, and 455-506; these read TSPPAKPAPETIKEESEEEERAERAP, INKSSPPPDTVKDGQIKKGAR, and PSPH…MPIS. Basic and acidic residues predominate over residues 404 to 415; that stretch reads TVKDGQIKKGAR. Positions 462-495 are enriched in polar residues; sequence NEHSAANPSGPTETQTQRRFSPSSRTSSIGSNRR.

Belongs to the protein kinase superfamily. Ser/Thr protein kinase family. APG1/unc-51/ULK1 subfamily. Homodimer. Forms a ternary complex with ATG13 and ATG17.

Its subcellular location is the cytoplasm. It localises to the preautophagosomal structure membrane. The enzyme catalyses L-seryl-[protein] + ATP = O-phospho-L-seryl-[protein] + ADP + H(+). It carries out the reaction L-threonyl-[protein] + ATP = O-phospho-L-threonyl-[protein] + ADP + H(+). Its function is as follows. Serine/threonine protein kinase involved in the cytoplasm to vacuole transport (Cvt) and found to be essential in autophagy, where it is required for the formation of autophagosomes. Involved in the clearance of protein aggregates which cannot be efficiently cleared by the proteasome. Required for selective autophagic degradation of the nucleus (nucleophagy) as well as for mitophagy which contributes to regulate mitochondrial quantity and quality by eliminating the mitochondria to a basal level to fulfill cellular energy requirements and preventing excess ROS production. Also involved in endoplasmic reticulum-specific autophagic process, in selective removal of ER-associated degradation (ERAD) substrates. Plays a key role in ATG9 and ATG23 cycling through the pre-autophagosomal structure and is necessary to promote ATG18 binding to ATG9 through phosphorylation of ATG9. Catalyzes phosphorylation of ATG4, decreasing the interaction between ATG4 and ATG8 and impairing deconjugation of PE-conjugated forms of ATG8. The polypeptide is Serine/threonine-protein kinase ATG1 (Pichia angusta (Yeast)).